A 222-amino-acid polypeptide reads, in one-letter code: Histidine biosynthesis bifunctional protein HisIE (222 aa).

The interval 1–128 is phosphoribosyl-AMP cyclohydrolase; the sequence is MQPLSPAFID…SNALSPPADA (128 aa). The tract at residues 129-222 is phosphoribosyl-ATP pyrophosphohydrolase; the sequence is CTELFRVIES…AARRGAPRRH (94 aa).

The protein in the N-terminal section; belongs to the PRA-CH family. In the C-terminal section; belongs to the PRA-PH family.

It is found in the cytoplasm. It carries out the reaction 1-(5-phospho-beta-D-ribosyl)-ATP + H2O = 1-(5-phospho-beta-D-ribosyl)-5'-AMP + diphosphate + H(+). The enzyme catalyses 1-(5-phospho-beta-D-ribosyl)-5'-AMP + H2O = 1-(5-phospho-beta-D-ribosyl)-5-[(5-phospho-beta-D-ribosylamino)methylideneamino]imidazole-4-carboxamide. The protein operates within amino-acid biosynthesis; L-histidine biosynthesis; L-histidine from 5-phospho-alpha-D-ribose 1-diphosphate: step 2/9. It functions in the pathway amino-acid biosynthesis; L-histidine biosynthesis; L-histidine from 5-phospho-alpha-D-ribose 1-diphosphate: step 3/9. In Parasynechococcus marenigrum (strain WH8102), this protein is Histidine biosynthesis bifunctional protein HisIE.